Reading from the N-terminus, the 144-residue chain is 3-hydroxyacyl-[acyl-carrier-protein] dehydratase FabZ (144 aa).

Histidine 51 is an active-site residue.

This sequence belongs to the thioester dehydratase family. FabZ subfamily.

The protein resides in the cytoplasm. The enzyme catalyses a (3R)-hydroxyacyl-[ACP] = a (2E)-enoyl-[ACP] + H2O. In terms of biological role, involved in unsaturated fatty acids biosynthesis. Catalyzes the dehydration of short chain beta-hydroxyacyl-ACPs and long chain saturated and unsaturated beta-hydroxyacyl-ACPs. In Enterococcus faecalis (strain ATCC 700802 / V583), this protein is 3-hydroxyacyl-[acyl-carrier-protein] dehydratase FabZ (fabZ1).